The following is a 451-amino-acid chain: BAHD acyltransferase At3g29680 (451 aa).

Residues His-161 and Asp-393 each act as proton acceptor in the active site.

This sequence belongs to the plant acyltransferase family.

This Arabidopsis thaliana (Mouse-ear cress) protein is BAHD acyltransferase At3g29680.